We begin with the raw amino-acid sequence, 272 residues long: 3-methyl-2-oxobutanoate hydroxymethyltransferase (272 aa).

Residues D42 and D86 each coordinate Mg(2+). 3-methyl-2-oxobutanoate is bound by residues 42 to 43 (DS), D86, and K116. Residue E118 participates in Mg(2+) binding. The active-site Proton acceptor is E185.

It belongs to the PanB family. In terms of assembly, homodecamer; pentamer of dimers. Mg(2+) serves as cofactor.

The protein resides in the cytoplasm. The catalysed reaction is 3-methyl-2-oxobutanoate + (6R)-5,10-methylene-5,6,7,8-tetrahydrofolate + H2O = 2-dehydropantoate + (6S)-5,6,7,8-tetrahydrofolate. The protein operates within cofactor biosynthesis; (R)-pantothenate biosynthesis; (R)-pantoate from 3-methyl-2-oxobutanoate: step 1/2. Catalyzes the reversible reaction in which hydroxymethyl group from 5,10-methylenetetrahydrofolate is transferred onto alpha-ketoisovalerate to form ketopantoate. This is 3-methyl-2-oxobutanoate hydroxymethyltransferase from Prochlorococcus marinus (strain MIT 9303).